A 273-amino-acid polypeptide reads, in one-letter code: MLLPDWLNALILGLVEGLTEFLPVSSTGHLILVGELLKFNDDRGKLFEVVIQSGAILAVCWEYRRKLVELLFGLGHSRQARRFVLNLIIAFLPAGIVGFLAGKAIKAHLFNSTTVTTTFILGGLIILWVERRQRPPRVESIDDVDWRLALKLGLFQTLAMIPGTSRSGATIIGGLLLGLSRRAATEFSFFLAIPTLFIATAYDLYKTGGILHAEDLSAFGIGFAAAFVSAFLAVRGLLRYIGGHDFTAFAWYRIAFGLVVLSTAHYGLVAWTG.

6 helical membrane passes run leucine 46 to tyrosine 63, phenylalanine 83 to lysine 103, leucine 109 to valine 129, alanine 184 to leucine 204, alanine 218 to leucine 238, and phenylalanine 249 to valine 269.

It belongs to the UppP family.

Its subcellular location is the cell inner membrane. The enzyme catalyses di-trans,octa-cis-undecaprenyl diphosphate + H2O = di-trans,octa-cis-undecaprenyl phosphate + phosphate + H(+). Its function is as follows. Catalyzes the dephosphorylation of undecaprenyl diphosphate (UPP). Confers resistance to bacitracin. This is Undecaprenyl-diphosphatase from Methylococcus capsulatus (strain ATCC 33009 / NCIMB 11132 / Bath).